The chain runs to 554 residues: MESKVREIHAPRGKTLNTKGWGQEAALRLLMNNLDPMVAKDPANLIVYGGKGKAARNWEAFDKIVQELKRLENDETLLIQSGKPVGVFKTTKDAPRVLIVNAQIVPHWATDDVFWDLEARGLTMFGQMTAGSWIYIGTQGVLQGTYETLSALARKEFGKDDLSGKWVLTSGLGEMGGAQPLAITMNNASGIVVEVDEEKIKRRLRDKYLDTWTESLDEALKMKDESLAEGKPTSIGLLGNAATVYDELMRRGIVPDVVSDQTAAHDLNLGYIPEGYTVESAAKFRDENREEYIKRVYASIVKEARAILWFQRHGSKTFDYGNNFRTRAQEGGMKDAFEIPGYVPAYIRDLFAVGSGPFRWVALSGDPQDIYRIDDAIIKNFQKDQHLVRWIKLAKERVHFQGLPARICYASYGEREEIGLMINDMVRSGDLQAPVAIGRDHHDTGSVASPYRETEKMKDGSDAIADWPILNALLNAISGATWVSVHHGGGTAIGNAIHAGFVIVADGTKDAEERIKRVLNADPGIGVIRHADAGYESSIDIIKKGPKFRYPYIN.

NAD(+)-binding positions include 49-50, glutamine 127, glutamate 194, 240-241, 261-265, 271-272, and tyrosine 320; these read GG, NA, QTAAH, and YI. Cysteine 408 is a catalytic residue. Glycine 490 is a binding site for NAD(+).

Belongs to the urocanase family. Requires NAD(+) as cofactor.

It is found in the cytoplasm. It catalyses the reaction 4-imidazolone-5-propanoate = trans-urocanate + H2O. Its pathway is amino-acid degradation; L-histidine degradation into L-glutamate; N-formimidoyl-L-glutamate from L-histidine: step 2/3. In terms of biological role, catalyzes the conversion of urocanate to 4-imidazolone-5-propionate. The polypeptide is Probable urocanate hydratase (Thermoplasma acidophilum (strain ATCC 25905 / DSM 1728 / JCM 9062 / NBRC 15155 / AMRC-C165)).